We begin with the raw amino-acid sequence, 513 residues long: Maturase K (513 aa).

The protein belongs to the intron maturase 2 family. MatK subfamily.

The protein resides in the plastid. The protein localises to the chloroplast. Its function is as follows. Usually encoded in the trnK tRNA gene intron. Probably assists in splicing its own and other chloroplast group II introns. This Typha angustifolia (Narrow leaf cattail) protein is Maturase K.